Consider the following 357-residue polypeptide: 3-isopropylmalate dehydrogenase (357 aa).

Residue 75 to 88 (GPKWEHLPPAEQPE) participates in NAD(+) binding. Substrate is bound by residues Arg96, Arg106, Arg135, and Asp224. The Mg(2+) site is built by Asp224, Asp248, and Asp252. An NAD(+)-binding site is contributed by 282–294 (GSAPDIAGQGIAN).

It belongs to the isocitrate and isopropylmalate dehydrogenases family. LeuB type 1 subfamily. As to quaternary structure, homodimer. Mg(2+) is required as a cofactor. The cofactor is Mn(2+).

It is found in the cytoplasm. It catalyses the reaction (2R,3S)-3-isopropylmalate + NAD(+) = 4-methyl-2-oxopentanoate + CO2 + NADH. It functions in the pathway amino-acid biosynthesis; L-leucine biosynthesis; L-leucine from 3-methyl-2-oxobutanoate: step 3/4. Catalyzes the oxidation of 3-carboxy-2-hydroxy-4-methylpentanoate (3-isopropylmalate) to 3-carboxy-4-methyl-2-oxopentanoate. The product decarboxylates to 4-methyl-2 oxopentanoate. This chain is 3-isopropylmalate dehydrogenase, found in Desulfotalea psychrophila (strain LSv54 / DSM 12343).